The chain runs to 372 residues: tRNA-specific 2-thiouridylase MnmA (372 aa).

Residues 16–23 and M42 contribute to the ATP site; that span reads GMSGGVDS. Residues 102 to 104 form an interaction with target base in tRNA region; that stretch reads NPD. Residue C107 is the Nucleophile of the active site. A disulfide bridge links C107 with C205. Position 132 (G132) interacts with ATP. The interval 155–157 is interaction with tRNA; sequence KDQ. The active-site Cysteine persulfide intermediate is the C205. The interaction with tRNA stretch occupies residues 317–318; sequence RY.

It belongs to the MnmA/TRMU family.

The protein resides in the cytoplasm. The catalysed reaction is S-sulfanyl-L-cysteinyl-[protein] + uridine(34) in tRNA + AH2 + ATP = 2-thiouridine(34) in tRNA + L-cysteinyl-[protein] + A + AMP + diphosphate + H(+). Functionally, catalyzes the 2-thiolation of uridine at the wobble position (U34) of tRNA, leading to the formation of s(2)U34. In Shewanella baltica (strain OS223), this protein is tRNA-specific 2-thiouridylase MnmA.